A 118-amino-acid polypeptide reads, in one-letter code: Non-specific lipid-transfer protein (118 aa).

The signal sequence occupies residues M1–A25. Cystine bridges form between C30–C76, C40–C53, C54–C98, and C74–C113.

It belongs to the plant LTP family.

In terms of biological role, plant non-specific lipid-transfer proteins transfer phospholipids as well as galactolipids across membranes. May play a role in wax or cutin deposition in the cell walls of expanding epidermal cells and certain secretory tissues. The protein is Non-specific lipid-transfer protein of Ambrosia artemisiifolia (Common ragweed).